A 282-amino-acid polypeptide reads, in one-letter code: Osteoclast-associated immunoglobulin-like receptor (282 aa).

Residues 1-18 (MALVLILQLLTLWPLCHT) form the signal peptide. 2 consecutive Ig-like domains span residues 22–116 (PSVP…SQPS) and 126–219 (ELPR…SWEG). The N-linked (GlcNAc...) asparagine glycan is linked to Asn48. The cysteines at positions 53 and 100 are disulfide-linked. Asn145 carries N-linked (GlcNAc...) asparagine glycosylation. The segment at 221–282 (GPEARPASSA…PAPPPSDPGV (62 aa)) is disordered. A compositionally biased stretch (pro residues) spans 273–282 (PAPPPSDPGV).

This sequence belongs to the leukocyte receptor complex/polymeric immunoglobulin receptor (PIR/LRC) family.

The protein localises to the secreted. It localises to the cell membrane. Functionally, regulator of osteoclastogenesis which plays an important bone-specific function in osteoclast differentiation. This is Osteoclast-associated immunoglobulin-like receptor (OSCAR) from Homo sapiens (Human).